A 459-amino-acid chain; its full sequence is Phosphoglucosamine mutase (459 aa).

Ser100 (phosphoserine intermediate) is an active-site residue. The Mg(2+) site is built by Ser100, Asp256, Asp258, and Asp260. At Ser100 the chain carries Phosphoserine.

This sequence belongs to the phosphohexose mutase family. Requires Mg(2+) as cofactor. In terms of processing, activated by phosphorylation.

It carries out the reaction alpha-D-glucosamine 1-phosphate = D-glucosamine 6-phosphate. Functionally, catalyzes the conversion of glucosamine-6-phosphate to glucosamine-1-phosphate. This Heliobacterium modesticaldum (strain ATCC 51547 / Ice1) protein is Phosphoglucosamine mutase.